We begin with the raw amino-acid sequence, 69 residues long: Amphipathic peptide StCT2 (69 aa).

Positions 1-23 (MKTQFAVLIISMILMQMLVQTEA) are cleaved as a signal peptide. Residue isoleucine 37 is modified to Isoleucine amide. Positions 41-69 (SLRNQDQFDNMFDSDLSDADLKLLDDLFD) are excised as a propeptide.

The protein belongs to the non-disulfide-bridged peptide (NDBP) superfamily. Short antimicrobial peptide (group 4) family. Expressed by the venom gland.

It is found in the secreted. Its subcellular location is the target cell membrane. In terms of biological role, antimicrobial peptide that is rapidly bactericidal against Gram-positive bacteria. The chain is Amphipathic peptide StCT2 from Scorpiops tibetanus (Scorpion).